A 1097-amino-acid chain; its full sequence is Apolipoprotein B receptor (1097 aa).

Disordered regions lie at residues 64 to 249 (QEDL…KGEE), 262 to 376 (AWGT…WTTS), 410 to 739 (EEEG…SRRG), 789 to 866 (GWDS…ARAE), and 889 to 1097 (VGWQ…PKPQ). Basic and acidic residues-rich tracts occupy residues 83–92 (GPGDDRRHEV), 158–177 (ERQE…RSWE), and 185–208 (VRAR…ETEG). Residues 209–218 (KAGAVGPKAA) are compositionally biased toward low complexity. Composition is skewed to basic and acidic residues over residues 219 to 232 (GDNR…READ) and 279 to 302 (GREE…EEAR). The span at 312 to 330 (TASGGEEAETASGGEEAGT) shows a compositional bias: low complexity. Positions 331–362 (ASGGEEAGIASGGEAGTASGGEEAGTASGGEE) are enriched in gly residues. Position 458 is a phosphoserine (serine 458). 2 stretches are compositionally biased toward basic and acidic residues: residues 463–487 (VDLR…RMEE) and 496–505 (EERGSSRDPV). Serine 510 is modified (phosphoserine). Threonine 572 bears the Phosphothreonine mark. Phosphoserine is present on serine 594. Basic and acidic residues-rich tracts occupy residues 594-606 (SKEE…EAGP) and 626-637 (NRTRKDMERGNT). Residues 640–652 (DAADGEQREEEET) are compositionally biased toward acidic residues. 3 stretches are compositionally biased toward basic and acidic residues: residues 791–800 (DSKEKEEAAA), 892–918 (QERE…RLLD), and 928–950 (RRAE…EEQP). Residues 1000–1017 (SRVHLSRSSSQRRSRPSF) are compositionally biased toward basic residues. Over residues 1041 to 1050 (APEQRPLQLE) the composition is skewed to low complexity.

As to quaternary structure, homodimer. Post-translationally, there are 2 forms in macrophages, the membrane-binding proteins 200 kDa (MBP 200) and 235 kDa (MBP 235), that can be reduced into a single active ligand-binding species with intermediate mobility (MBP 200R). As to expression, expressed in peripheral blood leukocytes &gt; bone marrow = spleen &gt; lymph node, and only faintly visible in appendix and thymus. Expressed in the brain, heart, kidney, liver, lung, pancreas, and placenta. Expressed primarily by reticuloendothelial cells: monocytes, macrophages, and endothelial cells. Expressed in atherosclerotic lesion foam cells.

It localises to the cell membrane. In terms of biological role, macrophage receptor that binds to the apolipoprotein B48 (APOB) of dietary triglyceride (TG)-rich lipoproteins (TRL) or to a like domain of APOB in hypertriglyceridemic very low density lipoprotein (HTG-VLDL). Binds and internalizes TRL when out of the context of the macrophage. May provide essential lipids to reticuloendothelial cells. Could also be involved in foam cell formation with elevated TRL and remnant lipoprotein (RLP). Mediates the rapid high-affinity uptake of chylomicrons (CM), HTG-VLDL, and trypsinized (tryp) VLDL devoid of APOE in vitro in macrophages. The polypeptide is Apolipoprotein B receptor (Homo sapiens (Human)).